The following is a 560-amino-acid chain: Cytosolic purine 5'-nucleotidase (560 aa).

Residue Asp52 is the Nucleophile of the active site. Positions 52 and 54 each coordinate IMP. Residues Asp52 and Asp54 each coordinate Mg(2+). Asp54 (proton donor) is an active-site residue. ATP is bound by residues Arg144 and Asn154. 7 residues coordinate IMP: Arg202, Asp206, Lys215, Thr249, Asn250, Ser251, and Lys292. Residue Asp351 coordinates Mg(2+). Ser418 bears the Phosphoserine mark. 2 residues coordinate ATP: Gln453 and Arg456. Ser502, Ser511, and Ser527 each carry phosphoserine. A disordered region spans residues 541–560 (PQEITHCHDEDDDEEEEEEE). The tract at residues 548–560 (HDEDDDEEEEEEE) is required for tetramer assembly. Residues 550–560 (EDDDEEEEEEE) show a composition bias toward acidic residues.

The protein belongs to the 5'(3')-deoxyribonucleotidase family. As to quaternary structure, homotetramer. Mg(2+) serves as cofactor.

Its subcellular location is the cytoplasm. It localises to the cytosol. The catalysed reaction is a ribonucleoside 5'-phosphate + H2O = a ribonucleoside + phosphate. The enzyme catalyses a 2'-deoxyribonucleoside + a ribonucleoside 5'-phosphate = a ribonucleoside + a 2'-deoxyribonucleoside 5'-phosphate. It catalyses the reaction IMP + H2O = inosine + phosphate. It carries out the reaction GMP + H2O = guanosine + phosphate. The catalysed reaction is dGMP + H2O = 2'-deoxyguanosine + phosphate. The enzyme catalyses dIMP + H2O = 2'-deoxyinosine + phosphate. It catalyses the reaction XMP + H2O = xanthosine + phosphate. It carries out the reaction inosine + GMP = guanosine + IMP. The catalysed reaction is dGMP + inosine = 2'-deoxyguanosine + IMP. The enzyme catalyses dIMP + inosine = 2'-deoxyinosine + IMP. It catalyses the reaction inosine + UMP = uridine + IMP. It carries out the reaction inosine + CMP = cytidine + IMP. The catalysed reaction is inosine + AMP = IMP + adenosine. Its activity is regulated as follows. Allosterically activated by various compounds including ATP, 2,3-BPG/2,3-Bisphosphoglyceric acid and Ap4A/P1,P4-bis(5'-adenosyl) tetraphosphate. Binding of an allosteric activator is a prerequisiste to magnesium and substrate binding. Inhibited by inorganic phosphate. Broad specificity cytosolic 5'-nucleotidase that catalyzes the dephosphorylation of 6-hydroxypurine nucleoside 5'-monophosphates. In addition, possesses a phosphotransferase activity by which it can transfer a phosphate from a donor nucleoside monophosphate to an acceptor nucleoside, preferably inosine, deoxyinosine and guanosine. Has the highest activities for IMP and GMP followed by dIMP, dGMP and XMP. Could also catalyze the transfer of phosphates from pyrimidine monophosphates but with lower efficiency. Through these activities regulates the purine nucleoside/nucleotide pools within the cell. In Mus musculus (Mouse), this protein is Cytosolic purine 5'-nucleotidase.